Here is a 124-residue protein sequence, read N- to C-terminus: QXGDLVAAGKKVYRQCHACHSVGEGAKNRVGPEQNNLFGRVAGSLPDFRYSKAMKSAGENGLVWTDKSLHEYLKNPRAYVPKTKMIFAGLKKPEDIDAVVAYLKTFDTDGMPDPDASTYTPPNG.

Gln1 bears the Pyrrolidone carboxylic acid mark. Residues Cys16, Cys19, His20, and Met85 each contribute to the heme c site.

This sequence belongs to the cytochrome c family. In terms of processing, binds 1 heme c group covalently per subunit.

Its subcellular location is the periplasm. Cytochrome c2 is found mainly in purple, non-sulfur, photosynthetic bacteria where it functions as the electron donor to the oxidized bacteriochlorophyll in the photophosphorylation pathway. However, it may also have a role in the respiratory chain and is found in some non-photosynthetic bacteria. The sequence is that of Cytochrome c2 from Afifella marina (Rhodobium marinum).